A 381-amino-acid chain; its full sequence is ATP-dependent (S)-NAD(P)H-hydrate dehydratase (381 aa).

One can recognise a YjeF C-terminal domain in the interval 84–376; the sequence is AEAVVRRITP…EFLGKSLEDI (293 aa). Residues Gly-197 and 250–256 contribute to the (6S)-NADPHX site; that span reads NVYEYKR. Residues 290–294 and 309–318 each bind ATP; these read KGKAD and GSPRRCGGQG. Asp-319 provides a ligand contact to (6S)-NADPHX.

The protein belongs to the NnrD/CARKD family. It depends on Mg(2+) as a cofactor.

It carries out the reaction (6S)-NADHX + ATP = ADP + phosphate + NADH + H(+). It catalyses the reaction (6S)-NADPHX + ATP = ADP + phosphate + NADPH + H(+). Functionally, catalyzes the dehydration of the S-form of NAD(P)HX at the expense of ATP, which is converted to ADP. Together with NAD(P)HX epimerase, which catalyzes the epimerization of the S- and R-forms, the enzyme allows the repair of both epimers of NAD(P)HX, a damaged form of NAD(P)H that is a result of enzymatic or heat-dependent hydration. This Sorghum bicolor (Sorghum) protein is ATP-dependent (S)-NAD(P)H-hydrate dehydratase.